A 351-amino-acid polypeptide reads, in one-letter code: Biotin synthase (351 aa).

Residues 49–265 (NRVRIHILDN…LSVFRLVNPD (217 aa)) form the Radical SAM core domain. [4Fe-4S] cluster contacts are provided by cysteine 64, cysteine 68, and cysteine 71. [2Fe-2S] cluster contacts are provided by cysteine 108, cysteine 140, cysteine 200, and arginine 269.

This sequence belongs to the radical SAM superfamily. Biotin synthase family. In terms of assembly, homodimer. The cofactor is [4Fe-4S] cluster. [2Fe-2S] cluster serves as cofactor.

It carries out the reaction (4R,5S)-dethiobiotin + (sulfur carrier)-SH + 2 reduced [2Fe-2S]-[ferredoxin] + 2 S-adenosyl-L-methionine = (sulfur carrier)-H + biotin + 2 5'-deoxyadenosine + 2 L-methionine + 2 oxidized [2Fe-2S]-[ferredoxin]. Its pathway is cofactor biosynthesis; biotin biosynthesis; biotin from 7,8-diaminononanoate: step 2/2. In terms of biological role, catalyzes the conversion of dethiobiotin (DTB) to biotin by the insertion of a sulfur atom into dethiobiotin via a radical-based mechanism. This is Biotin synthase from Leptospira biflexa serovar Patoc (strain Patoc 1 / Ames).